We begin with the raw amino-acid sequence, 247 residues long: DNA polymerase sliding clamp (247 aa).

This sequence belongs to the PCNA family. Homotrimer. The subunits circularize to form a toroid; DNA passes through its center. Replication factor C (RFC) is required to load the toroid on the DNA.

Sliding clamp subunit that acts as a moving platform for DNA processing. Responsible for tethering the catalytic subunit of DNA polymerase and other proteins to DNA during high-speed replication. The sequence is that of DNA polymerase sliding clamp from Thermofilum pendens (strain DSM 2475 / Hrk 5).